The following is an 886-amino-acid chain: Alanine--tRNA ligase (886 aa).

Zn(2+) contacts are provided by histidine 568, histidine 572, cysteine 670, and histidine 674.

It belongs to the class-II aminoacyl-tRNA synthetase family. It depends on Zn(2+) as a cofactor.

The protein localises to the cytoplasm. The enzyme catalyses tRNA(Ala) + L-alanine + ATP = L-alanyl-tRNA(Ala) + AMP + diphosphate. Catalyzes the attachment of alanine to tRNA(Ala) in a two-step reaction: alanine is first activated by ATP to form Ala-AMP and then transferred to the acceptor end of tRNA(Ala). Also edits incorrectly charged Ser-tRNA(Ala) and Gly-tRNA(Ala) via its editing domain. The sequence is that of Alanine--tRNA ligase from Prochlorococcus marinus (strain NATL1A).